We begin with the raw amino-acid sequence, 409 residues long: Argininosuccinate synthase (409 aa).

ATP is bound by residues alanine 12 to serine 20 and alanine 39. Residues tyrosine 90 and serine 95 each contribute to the L-citrulline site. Glycine 120 is a binding site for ATP. The L-aspartate site is built by threonine 122, asparagine 126, and aspartate 127. L-citrulline is bound at residue asparagine 126. L-citrulline is bound by residues arginine 130, serine 181, serine 190, glutamate 266, and tyrosine 278.

This sequence belongs to the argininosuccinate synthase family. Type 1 subfamily. In terms of assembly, homotetramer.

It is found in the cytoplasm. The enzyme catalyses L-citrulline + L-aspartate + ATP = 2-(N(omega)-L-arginino)succinate + AMP + diphosphate + H(+). It participates in amino-acid biosynthesis; L-arginine biosynthesis; L-arginine from L-ornithine and carbamoyl phosphate: step 2/3. The chain is Argininosuccinate synthase from Acidiphilium cryptum (strain JF-5).